A 260-amino-acid chain; its full sequence is Aspartate/glutamate leucyltransferase (260 aa).

The span at 241–251 shows a compositional bias: basic and acidic residues; that stretch reads DRLPEEGDRGP. The segment at 241 to 260 is disordered; it reads DRLPEEGDRGPARFPASLTE.

The protein belongs to the R-transferase family. Bpt subfamily.

It is found in the cytoplasm. It catalyses the reaction N-terminal L-glutamyl-[protein] + L-leucyl-tRNA(Leu) = N-terminal L-leucyl-L-glutamyl-[protein] + tRNA(Leu) + H(+). The catalysed reaction is N-terminal L-aspartyl-[protein] + L-leucyl-tRNA(Leu) = N-terminal L-leucyl-L-aspartyl-[protein] + tRNA(Leu) + H(+). Functionally, functions in the N-end rule pathway of protein degradation where it conjugates Leu from its aminoacyl-tRNA to the N-termini of proteins containing an N-terminal aspartate or glutamate. The protein is Aspartate/glutamate leucyltransferase of Gluconacetobacter diazotrophicus (strain ATCC 49037 / DSM 5601 / CCUG 37298 / CIP 103539 / LMG 7603 / PAl5).